An 81-amino-acid polypeptide reads, in one-letter code: Small ribosomal subunit protein bS16 (81 aa).

The protein belongs to the bacterial ribosomal protein bS16 family.

This chain is Small ribosomal subunit protein bS16, found in Colwellia psychrerythraea (strain 34H / ATCC BAA-681) (Vibrio psychroerythus).